The primary structure comprises 156 residues: Cytochrome c-type biogenesis protein CcmE 1 (156 aa).

Residues 1–8 (MNATRKQR) are Cytoplasmic-facing. Residues 9-29 (LCLVIGVLAAAALAVTLIVFA) form a helical; Signal-anchor for type II membrane protein membrane-spanning segment. Topologically, residues 30–156 (LQRNMSYLFT…ATAAPLTTPR (127 aa)) are periplasmic. Heme-binding residues include His123 and Tyr127.

The protein belongs to the CcmE/CycJ family.

Its subcellular location is the cell inner membrane. In terms of biological role, heme chaperone required for the biogenesis of c-type cytochromes. Transiently binds heme delivered by CcmC and transfers the heme to apo-cytochromes in a process facilitated by CcmF and CcmH. The polypeptide is Cytochrome c-type biogenesis protein CcmE 1 (Xanthomonas oryzae pv. oryzae (strain MAFF 311018)).